The primary structure comprises 301 residues: UDP-3-O-acyl-N-acetylglucosamine deacetylase (301 aa).

Zn(2+) contacts are provided by H81, H237, and D241. Residue H264 is the Proton donor of the active site.

It belongs to the LpxC family. It depends on Zn(2+) as a cofactor.

It carries out the reaction a UDP-3-O-[(3R)-3-hydroxyacyl]-N-acetyl-alpha-D-glucosamine + H2O = a UDP-3-O-[(3R)-3-hydroxyacyl]-alpha-D-glucosamine + acetate. It participates in glycolipid biosynthesis; lipid IV(A) biosynthesis; lipid IV(A) from (3R)-3-hydroxytetradecanoyl-[acyl-carrier-protein] and UDP-N-acetyl-alpha-D-glucosamine: step 2/6. Functionally, catalyzes the hydrolysis of UDP-3-O-myristoyl-N-acetylglucosamine to form UDP-3-O-myristoylglucosamine and acetate, the committed step in lipid A biosynthesis. The sequence is that of UDP-3-O-acyl-N-acetylglucosamine deacetylase from Leptospira interrogans serogroup Icterohaemorrhagiae serovar copenhageni (strain Fiocruz L1-130).